The sequence spans 372 residues: Cytochrome b (372 aa).

4 helical membrane passes run 25-45, 69-90, 105-125, and 170-190; these read FGSM…FLSM, WMMQ…YIHV, WLSG…GYVL, and FFAL…LHIM. His-75 and His-89 together coordinate heme b. Heme b contacts are provided by His-174 and His-188. Residue His-193 participates in a ubiquinone binding. 4 helical membrane-spanning segments follow: residues 218 to 238, 280 to 300, 312 to 332, and 339 to 358; these read YKDL…ISFI, LGGA…PFTH, FMQL…WTAT, and YTMI…MSNP.

This sequence belongs to the cytochrome b family. In terms of assembly, the cytochrome bc1 complex contains 3 respiratory subunits (MT-CYB, CYC1 and UQCRFS1), 2 core proteins (UQCRC1 and UQCRC2) and probably 6 low-molecular weight proteins. It depends on heme b as a cofactor.

The protein localises to the mitochondrion inner membrane. Functionally, component of the ubiquinol-cytochrome c reductase complex (complex III or cytochrome b-c1 complex) that is part of the mitochondrial respiratory chain. The b-c1 complex mediates electron transfer from ubiquinol to cytochrome c. Contributes to the generation of a proton gradient across the mitochondrial membrane that is then used for ATP synthesis. The protein is Cytochrome b (MT-CYB) of Acrantophis madagascariensis (Madagascar ground boa).